Reading from the N-terminus, the 59-residue chain is Embryonic testis differentiation protein homolog C (59 aa).

The disordered stretch occupies residues 1–22; it reads MDKELPKASPSEPALNIKKSGK.

The protein is Embryonic testis differentiation protein homolog C of Homo sapiens (Human).